The following is a 236-amino-acid chain: Small ribosomal subunit protein uS2c (236 aa).

Belongs to the universal ribosomal protein uS2 family.

It is found in the plastid. Its subcellular location is the chloroplast. This is Small ribosomal subunit protein uS2c (rps2) from Barbarea verna (Land cress).